Reading from the N-terminus, the 243-residue chain is Tryptophan synthase alpha chain (243 aa).

Residues Glu-32 and Asp-43 each act as proton acceptor in the active site.

Belongs to the TrpA family. As to quaternary structure, tetramer of two alpha and two beta chains.

It is found in the plastid. The protein resides in the chloroplast. It carries out the reaction (1S,2R)-1-C-(indol-3-yl)glycerol 3-phosphate + L-serine = D-glyceraldehyde 3-phosphate + L-tryptophan + H2O. It participates in amino-acid biosynthesis; L-tryptophan biosynthesis; L-tryptophan from chorismate: step 5/5. In terms of biological role, the alpha subunit is responsible for the aldol cleavage of indoleglycerol phosphate to indole and glyceraldehyde 3-phosphate. In Cyanidioschyzon merolae (strain NIES-3377 / 10D) (Unicellular red alga), this protein is Tryptophan synthase alpha chain.